We begin with the raw amino-acid sequence, 383 residues long: MRILVDENIPLADEFFGELGDITRLPGRDIDAAAVREQDLLVVRSITRVDAALLEGSRVRFVGTCTIGTDHVDLDYLREAGIGFANAPGCNADSVVDYVLSSLLLLAEEDGFHLAGKTIGIVGVGNVGSRLAERLDDLDVECLLCDPPRAEAEGREDFLSLDALLERAEIVCLHTPLVTEGEHATRHLLDASRIDALAPGTVLINAGRGACVDNQALRERLQRANDLRVVLDVWENEPGIDPALYDLVDIATPHIAGHSIDGKMRGTELVYQAAMRQFGLPARKKLGQLKPDPWLRKIVLTPWAPPLEALSLCTRACYDVRRDMLAFDRYRRRMGMATGFDAYRAEYPLRREFSTLRVELKQNKGGLRDALEGFGFKVKLSSK.

S45 and T66 together coordinate substrate. 2 residues coordinate NAD(+): D146 and T175. Residue R208 is part of the active site. D232 contacts NAD(+). E237 is an active-site residue. The Proton donor role is filled by H254. G257 provides a ligand contact to NAD(+).

Belongs to the D-isomer specific 2-hydroxyacid dehydrogenase family. PdxB subfamily. Homodimer.

The protein localises to the cytoplasm. It carries out the reaction 4-phospho-D-erythronate + NAD(+) = (R)-3-hydroxy-2-oxo-4-phosphooxybutanoate + NADH + H(+). Its pathway is cofactor biosynthesis; pyridoxine 5'-phosphate biosynthesis; pyridoxine 5'-phosphate from D-erythrose 4-phosphate: step 2/5. Its function is as follows. Catalyzes the oxidation of erythronate-4-phosphate to 3-hydroxy-2-oxo-4-phosphonooxybutanoate. This Chromohalobacter salexigens (strain ATCC BAA-138 / DSM 3043 / CIP 106854 / NCIMB 13768 / 1H11) protein is Erythronate-4-phosphate dehydrogenase.